Reading from the N-terminus, the 395-residue chain is MFRLLTACWSRQKATEGKQRNVTIIVIGLDNSGKSHLVAAFQRLIPSKMHSEMRPTQTTLLLDDYQVSVYDLTGDLKGREKWPNYYAEAHGLVFVVDSSDIARIQEVKIILTRLMFDKRVSGKPILILANKQDKKDALLPCDIIEYLLLERLVNETKSMCRVEPCSTIRNLPKRHQQPIVIGLRWLLAAIGDRYDELCTRHQTPSMSNISSSKNIRGCGERCSSDSLSTRGVGVVRNNHRQHFEKRQHLEHRQHVEQRHFEKRQHFESRQHLIQRSLDARPLKPILQKDGFRIRPKKNMSVTFALDVIMEEGECSRKIGAPNISKPCNSQCYDTKTPAPSADANLFKARRPKKRIETWDTEEMFLEDPRGEAFRSCVTGHSSRSSRNTQSLYFTG.

Residues glycine 28–serine 35, aspartate 71–aspartate 75, and asparagine 130–aspartate 133 contribute to the GTP site.

The protein belongs to the small GTPase superfamily. Arf family.

The chain is ADP-ribosylation factor-like protein 13A (Arl13a) from Rattus norvegicus (Rat).